Reading from the N-terminus, the 167-residue chain is Photosystem I assembly protein Ycf3 (167 aa).

TPR repeat units lie at residues 35 to 68 (AFAY…EVDA), 72 to 105 (SYIL…NPSL), and 120 to 153 (GEQA…APTN).

The protein belongs to the Ycf3 family.

The protein resides in the plastid. It is found in the chloroplast thylakoid membrane. In terms of biological role, essential for the assembly of the photosystem I (PSI) complex. May act as a chaperone-like factor to guide the assembly of the PSI subunits. This is Photosystem I assembly protein Ycf3 from Stigeoclonium helveticum (Green alga).